We begin with the raw amino-acid sequence, 280 residues long: Ribosomal RNA-processing protein 7 homolog A (280 aa).

Positions 59–159 (RTLFVLNVPP…TGIHKWISDY (101 aa)) constitute an RRM domain. Ser-99 bears the Phosphoserine mark.

Belongs to the RRP7 family. In terms of assembly, part of the small subunit (SSU) processome, composed of more than 70 proteins and the RNA chaperone small nucleolar RNA (snoRNA) U3. Interacts with NOL6; required for NOL6 localization to nucleolus.

Its subcellular location is the nucleus. It localises to the nucleolus. It is found in the cell projection. The protein localises to the cilium. The protein resides in the cytoplasm. Its subcellular location is the cytoskeleton. It localises to the microtubule organizing center. It is found in the centrosome. Nucleolar protein that is involved in ribosomal RNA (rRNA) processing. Also plays a role in primary cilia resorption, and cell cycle progression in neurogenesis and neocortex development. Part of the small subunit (SSU) processome, first precursor of the small eukaryotic ribosomal subunit. During the assembly of the SSU processome in the nucleolus, many ribosome biogenesis factors, an RNA chaperone and ribosomal proteins associate with the nascent pre-rRNA and work in concert to generate RNA folding, modifications, rearrangements and cleavage as well as targeted degradation of pre-ribosomal RNA by the RNA exosome. The sequence is that of Ribosomal RNA-processing protein 7 homolog A (RRP7A) from Pongo abelii (Sumatran orangutan).